We begin with the raw amino-acid sequence, 160 residues long: Nucleotide-binding protein CJA_2652 (160 aa).

This sequence belongs to the YajQ family.

Its function is as follows. Nucleotide-binding protein. The chain is Nucleotide-binding protein CJA_2652 from Cellvibrio japonicus (strain Ueda107) (Pseudomonas fluorescens subsp. cellulosa).